The sequence spans 436 residues: Histone acetyltransferase type B subunit 2 (436 aa).

WD repeat units follow at residues 136–176 (DHKG…SLPT), 187–227 (GHTK…KGNK), 237–277 (HHSS…TTRA), 284–324 (QHRD…TKLH), and 328–368 (SHTD…EEQT). Residues 370-374 (EDAQD) are interaction with the histone H4 N-terminus. One copy of the WD 6 repeat lies at 385 to 425 (GHTNRISDFSWNLNDPWVLCSAAEDNLLQVWKVADAIVGKD).

It belongs to the WD repeat RBAP46/RBAP48/MSI1 family. In terms of assembly, component of the HAT-B complex composed of at least hat1 and hat2. The HAT-B complex binds to histone H4 tail.

It localises to the cytoplasm. The protein localises to the nucleus. Regulatory subunit of the histone acetylase B (HAT-B) complex. The complex acetylates 'Lys-12' of histone H4 which is required for telomeric silencing. The chain is Histone acetyltransferase type B subunit 2 (hat2) from Aspergillus fumigatus (strain ATCC MYA-4609 / CBS 101355 / FGSC A1100 / Af293) (Neosartorya fumigata).